The following is a 179-amino-acid chain: tRNA-splicing endonuclease (179 aa).

Active-site residues include Tyr-115, His-123, and Lys-154.

This sequence belongs to the tRNA-intron endonuclease family. Archaeal short subfamily. In terms of assembly, homotetramer; although the tetramer contains four active sites, only two participate in the cleavage. Therefore, it should be considered as a dimer of dimers.

It catalyses the reaction pretRNA = a 3'-half-tRNA molecule with a 5'-OH end + a 5'-half-tRNA molecule with a 2',3'-cyclic phosphate end + an intron with a 2',3'-cyclic phosphate and a 5'-hydroxyl terminus.. Functionally, endonuclease that removes tRNA introns. Cleaves pre-tRNA at the 5'- and 3'-splice sites to release the intron. The products are an intron and two tRNA half-molecules bearing 2',3' cyclic phosphate and 5'-OH termini. Recognizes a pseudosymmetric substrate in which 2 bulged loops of 3 bases are separated by a stem of 4 bp. The polypeptide is tRNA-splicing endonuclease (Methanopyrus kandleri (strain AV19 / DSM 6324 / JCM 9639 / NBRC 100938)).